Reading from the N-terminus, the 270-residue chain is Acyl-[acyl-carrier-protein]--UDP-N-acetylglucosamine O-acyltransferase (270 aa).

This sequence belongs to the transferase hexapeptide repeat family. LpxA subfamily. As to quaternary structure, homotrimer.

Its subcellular location is the cytoplasm. It catalyses the reaction a (3R)-hydroxyacyl-[ACP] + UDP-N-acetyl-alpha-D-glucosamine = a UDP-3-O-[(3R)-3-hydroxyacyl]-N-acetyl-alpha-D-glucosamine + holo-[ACP]. It participates in glycolipid biosynthesis; lipid IV(A) biosynthesis; lipid IV(A) from (3R)-3-hydroxytetradecanoyl-[acyl-carrier-protein] and UDP-N-acetyl-alpha-D-glucosamine: step 1/6. Involved in the biosynthesis of lipid A, a phosphorylated glycolipid that anchors the lipopolysaccharide to the outer membrane of the cell. The sequence is that of Acyl-[acyl-carrier-protein]--UDP-N-acetylglucosamine O-acyltransferase from Bartonella tribocorum (strain CIP 105476 / IBS 506).